Here is an 83-residue protein sequence, read N- to C-terminus: Small integral membrane protein 22 (83 aa).

The chain crosses the membrane as a helical span at residues 32–52 (VAFIVFLTFMGTVLLLLLLVV). The disordered stretch occupies residues 60–83 (SPGPRRESPRKERPKGVDNLALEP). Basic and acidic residues predominate over residues 63-75 (PRRESPRKERPKG).

As to quaternary structure, interacts with CANX and DDOST. Interacts with SQLE; this interaction modulates lipid droplet formation.

It localises to the membrane. The protein localises to the late endosome. Functionally, may modulate lipid droplet formation throught interaction with SQLE. This is Small integral membrane protein 22 from Homo sapiens (Human).